A 607-amino-acid polypeptide reads, in one-letter code: Aspartate--tRNA(Asp/Asn) ligase (607 aa).

Glu168 contributes to the L-aspartate binding site. An aspartate region spans residues 192–195 (QLFK). An L-aspartate-binding site is contributed by Arg214. Residues 214-216 (RDE) and Gln223 each bind ATP. His449 lines the L-aspartate pocket. An ATP-binding site is contributed by Glu483. Arg490 contributes to the L-aspartate binding site. 535–538 (GWDR) provides a ligand contact to ATP. Residues 578–607 (LEAGVDARPKPEARAQAGTAGPAAPVADPT) are disordered. The span at 580–590 (AGVDARPKPEA) shows a compositional bias: basic and acidic residues. A compositionally biased stretch (low complexity) spans 591–607 (RAQAGTAGPAAPVADPT).

The protein belongs to the class-II aminoacyl-tRNA synthetase family. Type 1 subfamily. As to quaternary structure, homodimer.

The protein resides in the cytoplasm. It carries out the reaction tRNA(Asx) + L-aspartate + ATP = L-aspartyl-tRNA(Asx) + AMP + diphosphate. Its function is as follows. Aspartyl-tRNA synthetase with relaxed tRNA specificity since it is able to aspartylate not only its cognate tRNA(Asp) but also tRNA(Asn). Reaction proceeds in two steps: L-aspartate is first activated by ATP to form Asp-AMP and then transferred to the acceptor end of tRNA(Asp/Asn). In Salinispora tropica (strain ATCC BAA-916 / DSM 44818 / JCM 13857 / NBRC 105044 / CNB-440), this protein is Aspartate--tRNA(Asp/Asn) ligase.